The primary structure comprises 657 residues: MLFSCRAPSLLQRTALSSPLRLFAPCRPSFSRTFVTTTVRFSVEMETVNTSERLAQLRELMKQNNLDVYIVPSEDSHQSEYIAHCDARREFISGFTGSAGTAVISTTAAALSTDGRYFNQAAKQLDSNWKLLKRGLEGVLTWQEWTAEQAEGGKIVGVDPSVITAASARKLSETLEKGGSKLVGIEQNLVDQIWGTHRPQRPSEKVKIHPIEYAGKPFQEKIADLRKELKTKKRAGFIVSVLDEIAWLFNLRGNDIPYNPVFFSYAVITPDTVDLYIDDEKLSPEVKVHLGSDVVIKPYESIFADAKALSAKAPLTESGAPMKYLTSNKASWALSLSFGGEKKLDEARSPISDAKAIKNEVELKGMRDCHIRDGAALTEYFAWLENELINKKSTLDEVDGADKLEQIRSKHDKFVGLSFDTISSTGPNAAVIHYKPEKGVCSVIDPNAIYLCDSGAQYLDGTTDTTRTFHFSTPTEMEKKAFTLVLKGLIALDTAVFPKGTSGFALDALARQHLWRQGLDYLHGTGHGVGAYLNVHEGPIGVGTRIQYSEVSLSPGNVISDEPGYYEDGKFGIRIENIIMAREVETPYKFGDKPWLGFEHVTMTPIGQNLIETSLLSKEERQWVDNYHAEVWEKTSGFFKQDELTLNWLKKETQPLK.

Mn(2+) contacts are provided by aspartate 453, aspartate 464, glutamate 562, and glutamate 576.

It belongs to the peptidase M24B family. The cofactor is Mn(2+).

The enzyme catalyses Release of any N-terminal amino acid, including proline, that is linked to proline, even from a dipeptide or tripeptide.. Its function is as follows. Catalyzes the removal of a penultimate prolyl residue from the N-termini of peptides. This is Probable Xaa-Pro aminopeptidase P (ampp) from Talaromyces stipitatus (strain ATCC 10500 / CBS 375.48 / QM 6759 / NRRL 1006) (Penicillium stipitatum).